We begin with the raw amino-acid sequence, 347 residues long: Dual specificity mitogen-activated protein kinase kinase 3 (347 aa).

Met-1 bears the N-acetylmethionine mark. Pro residues predominate over residues 1-11 (MESPAASPPAS). Residues 1–45 (MESPAASPPASLPQTKGKSKRKKDLRISCVSKPPVSNPTPPRNLD) form a disordered region. At Ser-3 the chain carries Phosphoserine. The region spanning 64–325 (LVTISELGRG…YLELMEHPFF (262 aa)) is the Protein kinase domain. Residues 70–78 (LGRGAYGVV) and Lys-93 contribute to the ATP site. Asp-190 (proton acceptor) is an active-site residue. Ser-218 is subject to Phosphoserine. Thr-222 carries the post-translational modification Phosphothreonine.

It belongs to the protein kinase superfamily. STE Ser/Thr protein kinase family. MAP kinase kinase subfamily. In terms of assembly, component of a signaling complex containing at least AKAP13, PKN1, MAPK14, ZAK and MAP2K3. Within this complex, AKAP13 interacts directly with PKN1, which in turn recruits MAPK14, MAP2K3 and ZAK. Binds to DYRK1B/MIRK and increases its kinase activity. Part of a complex with MAP3K3, RAC1 and CCM2. Interacts with ARRB1. In terms of processing, autophosphorylated. Phosphorylation on Ser-218 and Thr-222 by MAP kinase kinase kinases positively regulates the kinase activity. Phosphorylated by TAOK2.

The catalysed reaction is L-seryl-[protein] + ATP = O-phospho-L-seryl-[protein] + ADP + H(+). It carries out the reaction L-threonyl-[protein] + ATP = O-phospho-L-threonyl-[protein] + ADP + H(+). It catalyses the reaction L-tyrosyl-[protein] + ATP = O-phospho-L-tyrosyl-[protein] + ADP + H(+). With respect to regulation, activated by dual phosphorylation on Ser-218 and Thr-222. Its function is as follows. Dual specificity kinase. Is activated by cytokines and environmental stress in vivo. Catalyzes the concomitant phosphorylation of a threonine and a tyrosine residue in the MAP kinase p38. Part of a signaling cascade that begins with the activation of the adrenergic receptor ADRA1B and leads to the activation of MAPK14. The polypeptide is Dual specificity mitogen-activated protein kinase kinase 3 (Map2k3) (Mus musculus (Mouse)).